The sequence spans 1387 residues: Magnesium-chelatase subunit ChlH, chloroplastic (1387 aa).

Residues methionine 1–arginine 50 constitute a chloroplast transit peptide.

This sequence belongs to the Mg-chelatase subunit H family. In terms of assembly, the magnesium chelatase complex is a heterotrimer consisting of subunits CHLI, CHLD and CHLH.

The protein localises to the plastid. It is found in the chloroplast stroma. Its subcellular location is the chloroplast membrane. The catalysed reaction is protoporphyrin IX + Mg(2+) + ATP + H2O = Mg-protoporphyrin IX + ADP + phosphate + 3 H(+). It participates in porphyrin-containing compound metabolism; chlorophyll biosynthesis. Its function is as follows. Involved in chlorophyll biosynthesis. Catalyzes the insertion of magnesium ion into protoporphyrin IX to yield Mg-protoporphyrin IX. The reaction takes place in two steps, with an ATP-dependent activation followed by an ATP-dependent chelation step. May be involved in the plastid-to-nucleus retrograde signaling. This chain is Magnesium-chelatase subunit ChlH, chloroplastic (CHLH), found in Oryza sativa subsp. indica (Rice).